Reading from the N-terminus, the 286-residue chain is 4-hydroxybenzoate octaprenyltransferase (286 aa).

Helical transmembrane passes span Gly21–Met40, Leu96–Val116, Phe142–Val162, Trp167–Val187, Gln210–Ala230, Leu235–Phe255, and Phe266–Phe286.

This sequence belongs to the UbiA prenyltransferase family. Mg(2+) serves as cofactor.

Its subcellular location is the cell inner membrane. It catalyses the reaction all-trans-octaprenyl diphosphate + 4-hydroxybenzoate = 4-hydroxy-3-(all-trans-octaprenyl)benzoate + diphosphate. Its pathway is cofactor biosynthesis; ubiquinone biosynthesis. Catalyzes the prenylation of para-hydroxybenzoate (PHB) with an all-trans polyprenyl group. Mediates the second step in the final reaction sequence of ubiquinone-8 (UQ-8) biosynthesis, which is the condensation of the polyisoprenoid side chain with PHB, generating the first membrane-bound Q intermediate 3-octaprenyl-4-hydroxybenzoate. In Shewanella sp. (strain ANA-3), this protein is 4-hydroxybenzoate octaprenyltransferase.